A 483-amino-acid polypeptide reads, in one-letter code: Probable gamma-aminobutyrate transaminase 4 (483 aa).

138 to 139 (GS) lines the pyridoxal 5'-phosphate pocket. Position 171 (tyrosine 171) interacts with substrate. Residue aspartate 278 coordinates pyridoxal 5'-phosphate. Lysine 307 is a binding site for substrate. The residue at position 307 (lysine 307) is an N6-(pyridoxal phosphate)lysine.

Belongs to the class-III pyridoxal-phosphate-dependent aminotransferase family. As to expression, not detected in roots, stems, flowers or leaves of healthy plants.

Its subcellular location is the cytoplasm. The enzyme catalyses 4-aminobutanoate + pyruvate = succinate semialdehyde + L-alanine. It carries out the reaction 4-aminobutanoate + glyoxylate = succinate semialdehyde + glycine. In terms of biological role, transaminase that degrades gamma-amino butyric acid (GABA). The sequence is that of Probable gamma-aminobutyrate transaminase 4 (GABA-T) from Oryza sativa subsp. japonica (Rice).